We begin with the raw amino-acid sequence, 360 residues long: NAD(P)H-quinone oxidoreductase subunit 1, chloroplastic (360 aa).

The next 9 membrane-spanning stretches (helical) occupy residues 27-47, 98-118, 129-149, 165-185, 203-223, 248-268, 269-289, 297-317, and 340-360; these read IWIF…VLVI, FSIG…VIPF, IGIF…LMSG, AAQS…ISLL, FWGW…ISSL, YSGI…LISS, LFVT…ISIL, IFGT…FLFI, and FLLP…LFSL.

This sequence belongs to the complex I subunit 1 family. As to quaternary structure, NDH is composed of at least 16 different subunits, 5 of which are encoded in the nucleus.

Its subcellular location is the plastid. The protein resides in the chloroplast thylakoid membrane. It catalyses the reaction a plastoquinone + NADH + (n+1) H(+)(in) = a plastoquinol + NAD(+) + n H(+)(out). The enzyme catalyses a plastoquinone + NADPH + (n+1) H(+)(in) = a plastoquinol + NADP(+) + n H(+)(out). Functionally, NDH shuttles electrons from NAD(P)H:plastoquinone, via FMN and iron-sulfur (Fe-S) centers, to quinones in the photosynthetic chain and possibly in a chloroplast respiratory chain. The immediate electron acceptor for the enzyme in this species is believed to be plastoquinone. Couples the redox reaction to proton translocation, and thus conserves the redox energy in a proton gradient. This is NAD(P)H-quinone oxidoreductase subunit 1, chloroplastic from Nasturtium officinale (Watercress).